The sequence spans 156 residues: ATP synthase subunit b (156 aa).

A helical membrane pass occupies residues 7-27 (LFVQAIVFLILVWFTMQFVWP).

This sequence belongs to the ATPase B chain family. F-type ATPases have 2 components, F(1) - the catalytic core - and F(0) - the membrane proton channel. F(1) has five subunits: alpha(3), beta(3), gamma(1), delta(1), epsilon(1). F(0) has three main subunits: a(1), b(2) and c(10-14). The alpha and beta chains form an alternating ring which encloses part of the gamma chain. F(1) is attached to F(0) by a central stalk formed by the gamma and epsilon chains, while a peripheral stalk is formed by the delta and b chains.

The protein localises to the cell inner membrane. Functionally, f(1)F(0) ATP synthase produces ATP from ADP in the presence of a proton or sodium gradient. F-type ATPases consist of two structural domains, F(1) containing the extramembraneous catalytic core and F(0) containing the membrane proton channel, linked together by a central stalk and a peripheral stalk. During catalysis, ATP synthesis in the catalytic domain of F(1) is coupled via a rotary mechanism of the central stalk subunits to proton translocation. Component of the F(0) channel, it forms part of the peripheral stalk, linking F(1) to F(0). This chain is ATP synthase subunit b, found in Verminephrobacter eiseniae (strain EF01-2).